A 414-amino-acid polypeptide reads, in one-letter code: Glutamyl-tRNA reductase (414 aa).

Substrate-binding positions include 49-52 (TCNR), serine 108, 113-115 (EPQ), and glutamine 119. Cysteine 50 acts as the Nucleophile in catalysis. 188 to 193 (GAGQTG) serves as a coordination point for NADP(+).

Belongs to the glutamyl-tRNA reductase family. As to quaternary structure, homodimer.

The catalysed reaction is (S)-4-amino-5-oxopentanoate + tRNA(Glu) + NADP(+) = L-glutamyl-tRNA(Glu) + NADPH + H(+). Its pathway is porphyrin-containing compound metabolism; protoporphyrin-IX biosynthesis; 5-aminolevulinate from L-glutamyl-tRNA(Glu): step 1/2. Functionally, catalyzes the NADPH-dependent reduction of glutamyl-tRNA(Glu) to glutamate 1-semialdehyde (GSA). The sequence is that of Glutamyl-tRNA reductase from Francisella philomiragia subsp. philomiragia (strain ATCC 25017 / CCUG 19701 / FSC 153 / O#319-036).